The sequence spans 1025 residues: DNA polymerase (1025 aa).

Belongs to the DNA polymerase type-B family.

It catalyses the reaction DNA(n) + a 2'-deoxyribonucleoside 5'-triphosphate = DNA(n+1) + diphosphate. In terms of biological role, replicates the viral genome. Host DNA polymerases cannot substitute for the viral enzyme in this process. The protein is DNA polymerase of Noctuidae (owlet moths).